Reading from the N-terminus, the 303-residue chain is Ferrochelatase (303 aa).

2 residues coordinate Fe cation: His185 and Glu262.

It belongs to the ferrochelatase family.

It is found in the cytoplasm. The enzyme catalyses heme b + 2 H(+) = protoporphyrin IX + Fe(2+). It participates in porphyrin-containing compound metabolism; protoheme biosynthesis; protoheme from protoporphyrin-IX: step 1/1. In terms of biological role, catalyzes the ferrous insertion into protoporphyrin IX. This Campylobacter jejuni subsp. doylei (strain ATCC BAA-1458 / RM4099 / 269.97) protein is Ferrochelatase.